A 204-amino-acid chain; its full sequence is Proteasome subunit beta type-2-A (204 aa).

Met-1 is modified (N-acetylmethionine).

It belongs to the peptidase T1B family. As to quaternary structure, component of the 20S core complex of the 26S proteasome. The 26S proteasome is composed of a core protease (CP), known as the 20S proteasome, capped at one or both ends by the 19S regulatory particle (RP/PA700). The 20S proteasome core is composed of 28 subunits that are arranged in four stacked rings, resulting in a barrel-shaped structure. The two end rings are each formed by seven alpha subunits, and the two central rings are each formed by seven beta subunits. The catalytic chamber with the active sites is on the inside of the barrel.

Its subcellular location is the cytoplasm. It localises to the nucleus. Its function is as follows. Non-catalytic component of the proteasome, a multicatalytic proteinase complex which is characterized by its ability to cleave peptides with Arg, Phe, Tyr, Leu, and Glu adjacent to the leaving group at neutral or slightly basic pH. The proteasome has an ATP-dependent proteolytic activity. In Arabidopsis thaliana (Mouse-ear cress), this protein is Proteasome subunit beta type-2-A (PBD1).